A 61-amino-acid polypeptide reads, in one-letter code: NLLQFNKMIKIMTKKNAFPFYTSYGCYCGWGGRCCFVHDCCYEKTDIYSYSWKRQICECDR.

Residues Tyr-27, Gly-29, and Gly-31 each contribute to the Ca(2+) site. The cysteines at positions 28 and 35 are disulfide-linked. Residue His-38 is part of the active site. Ca(2+) is bound at residue Asp-39. Cys-41 and Cys-59 are disulfide-bonded. Residue Asp-60 is part of the active site.

This sequence belongs to the phospholipase A2 family. Group II subfamily. D49 sub-subfamily. Homodimer. The cofactor is Ca(2+). As to expression, expressed by the venom gland.

It is found in the secreted. The enzyme catalyses a 1,2-diacyl-sn-glycero-3-phosphocholine + H2O = a 1-acyl-sn-glycero-3-phosphocholine + a fatty acid + H(+). Snake venom phospholipase A2 (PLA2) that displays edema-inducing activities. PLA2 catalyzes the calcium-dependent hydrolysis of the 2-acyl groups in 3-sn-phosphoglycerides. The chain is Phospholipase A2 from Crotalus atrox (Western diamondback rattlesnake).